The sequence spans 165 residues: Phosphopantetheine adenylyltransferase (165 aa).

Serine 10 contacts substrate. Residues 10–11 and histidine 18 each bind ATP; that span reads SF. 3 residues coordinate substrate: lysine 42, threonine 79, and arginine 93. ATP-binding positions include 94–96, glutamate 104, and 129–135; these read GLR and VRPITAT.

The protein belongs to the bacterial CoaD family. Homohexamer. Mg(2+) is required as a cofactor.

The protein localises to the cytoplasm. It catalyses the reaction (R)-4'-phosphopantetheine + ATP + H(+) = 3'-dephospho-CoA + diphosphate. It functions in the pathway cofactor biosynthesis; coenzyme A biosynthesis; CoA from (R)-pantothenate: step 4/5. Reversibly transfers an adenylyl group from ATP to 4'-phosphopantetheine, yielding dephospho-CoA (dPCoA) and pyrophosphate. In Nitrobacter winogradskyi (strain ATCC 25391 / DSM 10237 / CIP 104748 / NCIMB 11846 / Nb-255), this protein is Phosphopantetheine adenylyltransferase.